We begin with the raw amino-acid sequence, 264 residues long: 3-methyl-2-oxobutanoate hydroxymethyltransferase (264 aa).

Asp45 and Asp84 together coordinate Mg(2+). Residues 45-46 (DS), Asp84, and Lys112 contribute to the 3-methyl-2-oxobutanoate site. Glu114 is a binding site for Mg(2+). Catalysis depends on Glu181, which acts as the Proton acceptor.

The protein belongs to the PanB family. As to quaternary structure, homodecamer; pentamer of dimers. Requires Mg(2+) as cofactor.

It localises to the cytoplasm. The enzyme catalyses 3-methyl-2-oxobutanoate + (6R)-5,10-methylene-5,6,7,8-tetrahydrofolate + H2O = 2-dehydropantoate + (6S)-5,6,7,8-tetrahydrofolate. It participates in cofactor biosynthesis; (R)-pantothenate biosynthesis; (R)-pantoate from 3-methyl-2-oxobutanoate: step 1/2. In terms of biological role, catalyzes the reversible reaction in which hydroxymethyl group from 5,10-methylenetetrahydrofolate is transferred onto alpha-ketoisovalerate to form ketopantoate. In Erwinia tasmaniensis (strain DSM 17950 / CFBP 7177 / CIP 109463 / NCPPB 4357 / Et1/99), this protein is 3-methyl-2-oxobutanoate hydroxymethyltransferase.